The primary structure comprises 486 residues: Membrane-bound lytic murein transglycosylase F (486 aa).

Residues 1-26 (MFSPMALRPRCAKWLIVTGLFLMLGA) form the signal peptide. The segment at 27 to 267 (CVEKPSTLER…RLKDRYYGHV (241 aa)) is non-LT domain. Residues 268 to 486 (DVLGYVGAYT…TKPPEENPPL (219 aa)) are LT domain. Residue E314 is part of the active site. The interval 464–486 (VAEGNLHVPGVNKTKPPEENPPL) is disordered.

It in the N-terminal section; belongs to the bacterial solute-binding protein 3 family. The protein in the C-terminal section; belongs to the transglycosylase Slt family.

The protein localises to the cell outer membrane. It carries out the reaction Exolytic cleavage of the (1-&gt;4)-beta-glycosidic linkage between N-acetylmuramic acid (MurNAc) and N-acetylglucosamine (GlcNAc) residues in peptidoglycan, from either the reducing or the non-reducing ends of the peptidoglycan chains, with concomitant formation of a 1,6-anhydrobond in the MurNAc residue.. Its function is as follows. Murein-degrading enzyme that degrades murein glycan strands and insoluble, high-molecular weight murein sacculi, with the concomitant formation of a 1,6-anhydromuramoyl product. Lytic transglycosylases (LTs) play an integral role in the metabolism of the peptidoglycan (PG) sacculus. Their lytic action creates space within the PG sacculus to allow for its expansion as well as for the insertion of various structures such as secretion systems and flagella. The chain is Membrane-bound lytic murein transglycosylase F from Pseudomonas fluorescens (strain ATCC BAA-477 / NRRL B-23932 / Pf-5).